A 285-amino-acid chain; its full sequence is Protoheme IX farnesyltransferase (285 aa).

Transmembrane regions (helical) follow at residues 13–33 (LGKL…AFLA), 40–60 (LLPI…AMII), 89–109 (EAII…FIDN), 110–130 (ILTA…YTIL), 137–157 (LNIV…YTSL), 165–185 (GFLL…SLAL), 194–214 (AHYP…AIAI), 218–238 (LMIP…LIAF), and 265–285 (FIFS…VKLI).

Belongs to the UbiA prenyltransferase family. Protoheme IX farnesyltransferase subfamily.

The protein localises to the cell membrane. The catalysed reaction is heme b + (2E,6E)-farnesyl diphosphate + H2O = Fe(II)-heme o + diphosphate. The protein operates within porphyrin-containing compound metabolism; heme O biosynthesis; heme O from protoheme: step 1/1. Its function is as follows. Converts heme B (protoheme IX) to heme O by substitution of the vinyl group on carbon 2 of heme B porphyrin ring with a hydroxyethyl farnesyl side group. The chain is Protoheme IX farnesyltransferase from Saccharolobus islandicus (strain Y.G.57.14 / Yellowstone #1) (Sulfolobus islandicus).